Reading from the N-terminus, the 756-residue chain is Receptor-like protein 3 (756 aa).

The first 50 residues, 1-50 (MTNEGRFKAKGFVRTSSTTRPIQALSFHMIGILLQCVLFISVLSIAVSEA), serve as a signal peptide directing secretion. The tract at residues 51 to 88 (LCNSQDRESLLWFSGNVSSSVSPLNWNPSIDCCSWEGI) is N-cap. The Extracellular segment spans residues 51–725 (LCNSQDRESL…ADTEDEEELK (675 aa)). N-linked (GlcNAc...) asparagine glycosylation occurs at Asn-66. LRR repeat units follow at residues 95–119 (DSHI…VLRL), 120–143 (HHLS…FLSA), 145–169 (DQLK…TFRN), 174–199 (CFPI…IFMQ), 201–225 (TFDL…MCKS), 226–250 (SPQL…LGRC), 252–274 (KLSV…IYNL), 275–298 (SELE…ITHL), 299–322 (TKLK…IGQL), 323–346 (SRLQ…LANC), 348–370 (NLVK…DFSR), 371–395 (FQSL…VHSC), 397–419 (SLSA…VLEL), 420–443 (ESLS…GILQ), 445–471 (CRNL…LISS), 474–498 (FPNL…LIKL), 499–521 (KSLA…WLGT), and 522–546 (FPHL…LFQL). 2 N-linked (GlcNAc...) asparagine glycosylation sites follow: Asn-126 and Asn-169. A glycan (N-linked (GlcNAc...) asparagine) is linked at Asn-208. Residues Asn-262 and Asn-273 are each glycosylated (N-linked (GlcNAc...) asparagine). 2 N-linked (GlcNAc...) asparagine glycosylation sites follow: Asn-334 and Asn-345. Asn-381 carries an N-linked (GlcNAc...) asparagine glycan. 3 N-linked (GlcNAc...) asparagine glycosylation sites follow: Asn-434, Asn-447, and Asn-459. An LRR 19; degenerate repeat occupies 548-569 (ALMSQKAYDATERNYLKLPVFV). LRR repeat units lie at residues 570–593 (SPNN…IYIR), 608–631 (LKVL…ELSK), 632–656 (LTSL…LTSL), and 658–681 (YMSY…QFDT). An N-linked (GlcNAc...) asparagine glycan is attached at Asn-573. An N-linked (GlcNAc...) asparagine glycan is attached at Asn-666. The tract at residues 699-725 (LTSCKASTKLPATTTNKADTEDEEELK) is C-cap/acidic domain. Residues 726-746 (FIFILGVATGFFVSYCFYWCF) traverse the membrane as a helical segment. At 747-756 (FARLDAFISK) the chain is on the cytoplasmic side.

It belongs to the RLP family. Expressed at very low levels in the shoot apex.

The protein localises to the cell membrane. Functionally, involved in the perception of CLV3 and CLV3-like peptides, that act as extracellular signals regulating meristems maintenance. Contributes, with WAKL22/RFO1, to resistance to F.oxysporum (f.) matthioli in cv. Columbia relative to cv. Ty-0. The protein is Receptor-like protein 3 of Arabidopsis thaliana (Mouse-ear cress).